We begin with the raw amino-acid sequence, 610 residues long: Glutamine--fructose-6-phosphate aminotransferase [isomerizing] (610 aa).

The Nucleophile; for GATase activity role is filled by cysteine 2. Positions 2 to 217 (CGIVGYVGQK…DKEFVVLTND (216 aa)) constitute a Glutamine amidotransferase type-2 domain. SIS domains follow at residues 284-424 (ITKE…LKGS) and 453-600 (LIKE…VDKP). The For Fru-6P isomerization activity role is filled by lysine 605.

As to quaternary structure, homodimer.

The protein resides in the cytoplasm. The catalysed reaction is D-fructose 6-phosphate + L-glutamine = D-glucosamine 6-phosphate + L-glutamate. Catalyzes the first step in hexosamine metabolism, converting fructose-6P into glucosamine-6P using glutamine as a nitrogen source. This is Glutamine--fructose-6-phosphate aminotransferase [isomerizing] from Clostridium perfringens (strain 13 / Type A).